The sequence spans 188 residues: Dual specificity protein phosphatase 18 (188 aa).

The Tyrosine-protein phosphatase domain maps to 19 to 160; sequence GLSQITKSLY…LIHYEFQLFG (142 aa). Cys-104 (phosphocysteine intermediate) is an active-site residue.

It belongs to the protein-tyrosine phosphatase family. Non-receptor class dual specificity subfamily. In terms of tissue distribution, widely expressed with highest levels in liver, brain, ovary and testis.

It localises to the cytoplasm. The protein localises to the nucleus. Its subcellular location is the mitochondrion inner membrane. It catalyses the reaction O-phospho-L-tyrosyl-[protein] + H2O = L-tyrosyl-[protein] + phosphate. The enzyme catalyses O-phospho-L-seryl-[protein] + H2O = L-seryl-[protein] + phosphate. The catalysed reaction is O-phospho-L-threonyl-[protein] + H2O = L-threonyl-[protein] + phosphate. Its activity is regulated as follows. Activated by manganese ions, inhibited by iodoacetic acid. Its function is as follows. Can dephosphorylate single and diphosphorylated synthetic MAPK peptides, with preference for the phosphotyrosine and diphosphorylated forms over phosphothreonine. In vitro, dephosphorylates p-nitrophenyl phosphate (pNPP). The sequence is that of Dual specificity protein phosphatase 18 (DUSP18) from Homo sapiens (Human).